The following is a 49-amino-acid chain: Sperm protamine P1 (49 aa).

Belongs to the protamine P1 family. As to expression, testis.

Its subcellular location is the nucleus. It is found in the chromosome. In terms of biological role, protamines substitute for histones in the chromatin of sperm during the haploid phase of spermatogenesis. They compact sperm DNA into a highly condensed, stable and inactive complex. This Rhinopoma hardwickii (Lesser mouse-tailed bat) protein is Sperm protamine P1 (PRM1).